Here is a 429-residue protein sequence, read N- to C-terminus: Enolase (429 aa).

Gln167 lines the (2R)-2-phosphoglycerate pocket. Glu209 serves as the catalytic Proton donor. The Mg(2+) site is built by Asp246, Glu289, and Asp316. Positions 341, 370, 371, and 392 each coordinate (2R)-2-phosphoglycerate. The Proton acceptor role is filled by Lys341.

The protein belongs to the enolase family. In terms of assembly, component of the RNA degradosome, a multiprotein complex involved in RNA processing and mRNA degradation. It depends on Mg(2+) as a cofactor.

It localises to the cytoplasm. The protein localises to the secreted. It is found in the cell surface. The enzyme catalyses (2R)-2-phosphoglycerate = phosphoenolpyruvate + H2O. The protein operates within carbohydrate degradation; glycolysis; pyruvate from D-glyceraldehyde 3-phosphate: step 4/5. Functionally, catalyzes the reversible conversion of 2-phosphoglycerate (2-PG) into phosphoenolpyruvate (PEP). It is essential for the degradation of carbohydrates via glycolysis. The sequence is that of Enolase from Cellvibrio japonicus (strain Ueda107) (Pseudomonas fluorescens subsp. cellulosa).